The chain runs to 317 residues: Zinc transporter ZIP3 (317 aa).

At 1–3 (MSQ) the chain is on the extracellular side. Residues 4–24 (LLVAKVLCMVGVFFFMLLGSL) form a helical membrane-spanning segment. Over 25 to 42 (LPVKVIEADFEKAHRSKK) the chain is Cytoplasmic. Residues 43 to 63 (VLSLCNTFGGGVFLATCFNAL) traverse the membrane as a helical segment. At 64-85 (LPAVRDKLQQVLSLGHISTDYP) the chain is on the extracellular side. A helical membrane pass occupies residues 86 to 106 (LAETLMMVGFFLTVFVEQLVL). Over 107 to 172 (TFRRERPPFI…RELGRPGPLR (66 aa)) the chain is Cytoplasmic. 2 positions are modified to phosphoserine: serine 125 and serine 129. Residues 173 to 193 (LLSLVFALSAHSVFEGLALGL) traverse the membrane as a helical segment. The Extracellular segment spans residues 194-199 (QEEGER). The chain crosses the membrane as a helical span at residues 200–220 (VVSLFVGVAVHETLVAVALGI). At 221-232 (SMARSAVPLRDA) the chain is on the cytoplasmic side. The chain crosses the membrane as a helical span at residues 233 to 253 (AKLAVTVSAMIPVGIGLGLGI). Topologically, residues 254 to 265 (ESARSVASSVAS) are extracellular. A helical transmembrane segment spans residues 266–286 (ALLQGLAGGTFLFVTFLEILA). Residues 287–294 (KELEERSE) lie on the Cytoplasmic side of the membrane. Residues 295–315 (QLLKVLFLVLGYAVLAGMVFL) form a helical membrane-spanning segment. At 316–317 (KW) the chain is on the extracellular side.

This sequence belongs to the ZIP transporter (TC 2.A.5) family.

The protein resides in the cell membrane. It localises to the apical cell membrane. The enzyme catalyses Zn(2+)(in) = Zn(2+)(out). Functionally, transporter for the divalent cation Zn(2+). Mediates the influx of Zn(2+) into cells from extracellular space. Controls Zn(2+) accumulation into dentate gyrus granule cells in the hippocampus. Mediates Zn(2+) reuptake from the secreted milk within the alveolar lumen. The protein is Zinc transporter ZIP3 (Slc39a3) of Rattus norvegicus (Rat).